Consider the following 1253-residue polypeptide: Latent-transforming growth factor beta-binding protein 3 (1253 aa).

The N-terminal stretch at Met1–Ala38 is a signal peptide. A glycan (N-linked (GlcNAc...) asparagine) is linked at Asn86. Positions Arg106–Gln138 constitute an EGF-like 1 domain. 3 disulfide bridges follow: Cys110–Cys120, Cys114–Cys126, and Cys128–Cys137. The interval Gly244–Gln270 is disordered. The 55-residue stretch at Gly274–Gly328 folds into the TB 1 domain. 3 cysteine pairs are disulfide-bonded: Cys276-Cys300, Cys286-Cys313, and Cys301-Cys316. N-linked (GlcNAc...) asparagine glycosylation occurs at Asn346. Residues Asp352 to Ile392 form the EGF-like 2; calcium-binding domain. 7 cysteine pairs are disulfide-bonded: Cys356–Cys367, Cys362–Cys376, Cys378–Cys391, Cys402–Cys425, Cys412–Cys437, Cys426–Cys440, and Cys427–Cys452. The 53-residue stretch at Ser400–Cys452 folds into the TB 2 domain. Positions Phe475 to Leu555 are disordered. The 42-residue stretch at Glu571 to Val612 folds into the EGF-like 3 domain. 32 disulfides stabilise this stretch: Cys575-Cys587, Cys582-Cys596, Cys598-Cys611, Cys617-Cys629, Cys622-Cys638, Cys661-Cys673, Cys667-Cys682, Cys684-Cys698, Cys745-Cys756, Cys751-Cys765, Cys767-Cys780, Cys786-Cys797, Cys792-Cys806, Cys808-Cys821, Cys827-Cys838, Cys833-Cys847, Cys849-Cys861, Cys867-Cys880, Cys874-Cys889, Cys891-Cys904, Cys916-Cys939, Cys926-Cys951, Cys940-Cys956, Cys941-Cys968, Cys994-Cys1007, Cys1002-Cys1016, Cys1018-Cys1031, Cys1037-Cys1048, Cys1043-Cys1057, Cys1059-Cys1072, Cys1113-Cys1127, and Cys1114-Cys1136. The EGF-like 4; calcium-binding domain occupies Asp613–Val656. The EGF-like 5; calcium-binding domain occupies Asp657–Glu699. One can recognise an EGF-like 6; calcium-binding domain in the interval Asp741–Ile781. The EGF-like 7; calcium-binding domain maps to Asp782–Glu822. The EGF-like 8; calcium-binding domain maps to Asp823–Cys861. Asn842 carries an N-linked (GlcNAc...) asparagine glycan. The region spanning Asp863 to Glu905 is the EGF-like 9; calcium-binding domain. The region spanning Lys914–Cys968 is the TB 3 domain. The N-linked (GlcNAc...) asparagine glycan is linked to Asn933. An EGF-like 10; calcium-binding domain is found at Asp990 to Val1032. Residues Asp1033–Cys1072 enclose the EGF-like 11; calcium-binding domain. Residues Glu1086 to Cys1136 enclose the TB 4 domain. The segment covering Thr1138–Asp1148 has biased composition (polar residues). The interval Thr1138–Asp1169 is disordered. The EGF-like 12; calcium-binding domain occupies Asp1204 to Arg1231. Disulfide bonds link Cys1208-Cys1223 and Cys1218-Cys1232. The N-linked (GlcNAc...) asparagine glycan is linked to Asn1225.

This sequence belongs to the LTBP family. As to quaternary structure, forms part of the large latent transforming growth factor beta (TGFB1) precursor complex; removal is essential for activation of complex. Interacts with EFEMP2. Post-translationally, contains hydroxylated asparagine residues. Two intrachain disulfide bonds from the TB3 domain are rearranged upon TGFB1 binding, and form interchain bonds with TGFB1 propeptide, anchoring it to the extracellular matrix.

Its subcellular location is the secreted. The protein resides in the extracellular space. It localises to the extracellular matrix. Key regulator of transforming growth factor beta (TGFB1, TGFB2 and TGFB3) that controls TGF-beta activation by maintaining it in a latent state during storage in extracellular space. Associates specifically via disulfide bonds with the Latency-associated peptide (LAP), which is the regulatory chain of TGF-beta, and regulates integrin-dependent activation of TGF-beta. The sequence is that of Latent-transforming growth factor beta-binding protein 3 (Ltbp3) from Mus musculus (Mouse).